The primary structure comprises 331 residues: Biotin synthase (331 aa).

Residues 52–281 (FFQNKVKLNM…TKEIRVSGGR (230 aa)) form the Radical SAM core domain. [4Fe-4S] cluster is bound by residues C70, C74, and C77. C114, C146, C206, and R276 together coordinate [2Fe-2S] cluster.

Belongs to the radical SAM superfamily. Biotin synthase family. As to quaternary structure, homodimer. [4Fe-4S] cluster serves as cofactor. Requires [2Fe-2S] cluster as cofactor.

The catalysed reaction is (4R,5S)-dethiobiotin + (sulfur carrier)-SH + 2 reduced [2Fe-2S]-[ferredoxin] + 2 S-adenosyl-L-methionine = (sulfur carrier)-H + biotin + 2 5'-deoxyadenosine + 2 L-methionine + 2 oxidized [2Fe-2S]-[ferredoxin]. It functions in the pathway cofactor biosynthesis; biotin biosynthesis; biotin from 7,8-diaminononanoate: step 2/2. In terms of biological role, catalyzes the conversion of dethiobiotin (DTB) to biotin by the insertion of a sulfur atom into dethiobiotin via a radical-based mechanism. This is Biotin synthase from Bacillus pumilus (strain SAFR-032).